A 208-amino-acid chain; its full sequence is N-(5'-phosphoribosyl)anthranilate isomerase (208 aa).

It belongs to the TrpF family.

The catalysed reaction is N-(5-phospho-beta-D-ribosyl)anthranilate = 1-(2-carboxyphenylamino)-1-deoxy-D-ribulose 5-phosphate. Its pathway is amino-acid biosynthesis; L-tryptophan biosynthesis; L-tryptophan from chorismate: step 3/5. The polypeptide is N-(5'-phosphoribosyl)anthranilate isomerase (Nitrosomonas eutropha (strain DSM 101675 / C91 / Nm57)).